Reading from the N-terminus, the 97-residue chain is Putative pterin-4-alpha-carbinolamine dehydratase (97 aa).

This sequence belongs to the pterin-4-alpha-carbinolamine dehydratase family.

The enzyme catalyses (4aS,6R)-4a-hydroxy-L-erythro-5,6,7,8-tetrahydrobiopterin = (6R)-L-erythro-6,7-dihydrobiopterin + H2O. This chain is Putative pterin-4-alpha-carbinolamine dehydratase, found in Dinoroseobacter shibae (strain DSM 16493 / NCIMB 14021 / DFL 12).